The chain runs to 194 residues: Lymphocyte antigen 6 complex locus protein G5b (194 aa).

A signal peptide spans Met1–Gly18. The UPAR/Ly6 domain maps to Arg26 to Gly118. Cystine bridges form between Cys28–Cys55, Cys31–Cys40, Cys47–Cys73, Cys81–Cys98, and Cys99–Cys104. Asn63 carries an N-linked (GlcNAc...) asparagine glycan. N-linked (GlcNAc...) asparagine glycosylation is present at Asn141.

Monomer. N-glycosylated.

It localises to the secreted. This is Lymphocyte antigen 6 complex locus protein G5b (Ly6g5b) from Mus musculus (Mouse).